A 240-amino-acid chain; its full sequence is Guanine nucleotide exchange factor sopE2 (240 aa).

Residues 78 to 240 (LTSKTVKDFM…IANKYLQNAS (163 aa)) form a GEF catalytic domain region.

It belongs to the GEF (guanine exchange factor) SopE family.

Its subcellular location is the secreted. In terms of biological role, activator for CDC42 by directly engaging this Rho GTPase and acting as potent guanine nucleotide exchange factor (GEF). This activation results in actin cytoskeleton rearrangements and stimulates membrane ruffling, promoting bacterial entry into non-phagocytic cells. Also activates NF-kB, p38 and ERK kinases, which are known to be involved in the induction of IL-8 expression. Chaperone InvB is required for secretion, translocation and stabilization of intracellular levels of sopE2. This is Guanine nucleotide exchange factor sopE2 (sopE2) from Salmonella typhimurium (strain LT2 / SGSC1412 / ATCC 700720).